We begin with the raw amino-acid sequence, 778 residues long: Lon protease (778 aa).

The region spanning 4–187 (LPVLPLTDAV…LLVGWVRAHL (184 aa)) is the Lon N-terminal domain. Position 346-353 (346-353 (GPPGVGKT)) interacts with ATP. Positions 581 to 762 (TAVPGVATGL…ADVLALALRP (182 aa)) constitute a Lon proteolytic domain. Residues Ser-668 and Lys-711 contribute to the active site.

This sequence belongs to the peptidase S16 family. As to quaternary structure, homohexamer. Organized in a ring with a central cavity.

The protein resides in the cytoplasm. It carries out the reaction Hydrolysis of proteins in presence of ATP.. ATP-dependent serine protease that mediates the selective degradation of mutant and abnormal proteins as well as certain short-lived regulatory proteins. Required for cellular homeostasis and for survival from DNA damage and developmental changes induced by stress. Degrades polypeptides processively to yield small peptide fragments that are 5 to 10 amino acids long. Binds to DNA in a double-stranded, site-specific manner. The protein is Lon protease of Salinispora arenicola (strain CNS-205).